The sequence spans 312 residues: Glyoxylate/hydroxypyruvate reductase A (312 aa).

Arg227 is an active-site residue. His275 serves as the catalytic Proton donor.

It belongs to the D-isomer specific 2-hydroxyacid dehydrogenase family. GhrA subfamily.

It localises to the cytoplasm. The enzyme catalyses glycolate + NADP(+) = glyoxylate + NADPH + H(+). It carries out the reaction (R)-glycerate + NAD(+) = 3-hydroxypyruvate + NADH + H(+). It catalyses the reaction (R)-glycerate + NADP(+) = 3-hydroxypyruvate + NADPH + H(+). In terms of biological role, catalyzes the NADPH-dependent reduction of glyoxylate and hydroxypyruvate into glycolate and glycerate, respectively. The sequence is that of Glyoxylate/hydroxypyruvate reductase A from Escherichia coli (strain SMS-3-5 / SECEC).